Here is a 601-residue protein sequence, read N- to C-terminus: Tubulin polyglutamylase ttll-4 (601 aa).

Over residues 1-18 the composition is skewed to polar residues; that stretch reads MSSGYSSAPSVSHTSSDT. The disordered stretch occupies residues 1 to 37; that stretch reads MSSGYSSAPSVSHTSSDTDLNRIDSYDDGAEETTDEQ. A TTL domain is found at 138-476; sequence QARLTWCHNS…YVPPSFDKLS (339 aa). Residues Lys254, 260 to 261, 282 to 285, and 295 to 297 contribute to the ATP site; these read RG, QHYI, and KFD. Position 260 (Arg260) interacts with a protein. Arg321 is an L-glutamate binding site. 342–343 contributes to the ATP binding site; the sequence is TN. L-glutamate-binding residues include Tyr344, Ser345, and Lys362. Asp422, Glu435, and Asn437 together coordinate Mg(2+). Lys453 contacts L-glutamate.

Belongs to the tubulin--tyrosine ligase family. Requires Mg(2+) as cofactor. As to expression, expressed in many sensory neurons in amphid.

The catalysed reaction is L-glutamyl-[protein] + L-glutamate + ATP = gamma-L-glutamyl-L-glutamyl-[protein] + ADP + phosphate + H(+). Monoglutamylase which modifies tubulin, adding a single glutamate on the gamma-carboxyl group of specific glutamate residues of target proteins. Involved in the side-chain initiation step of the polyglutamylation reaction but not in the elongation step. Preferentially modifies beta-tail tubulin over the alpha-tubulin. Involved in side-chain glutamylation of tubulin in sensory cilia. Together with ttll-5 and ttll-11, required for male mating. This chain is Tubulin polyglutamylase ttll-4, found in Caenorhabditis elegans.